The sequence spans 90 residues: Probable Fe(2+)-trafficking protein (90 aa).

This sequence belongs to the Fe(2+)-trafficking protein family.

Could be a mediator in iron transactions between iron acquisition and iron-requiring processes, such as synthesis and/or repair of Fe-S clusters in biosynthetic enzymes. The protein is Probable Fe(2+)-trafficking protein of Pseudomonas fluorescens (strain Pf0-1).